The primary structure comprises 1061 residues: MLFSLTDTMDSSRLYALISRFRPSRAEIWTCRSRGTVTLSVLAFEDPNGSGNAAEEEEDERQLPSGIDFPICFLVRGRQVHLIQQIQPVQRCEHCARFYKHQHECSVRRRDFYFHHINSHSSNWWQEIHFFPIGSHPRTERLFITYDVETYTWMGAFGKQLVPFMLVMKLSGDDNLVKHALQLALELGWDQWEKDSTTFYCLTPEKMKVGQQFRTYRNRLQTSLATDLWMTFLQKNPHLSQWAQEENGLVALEDLSYEDLKRAPAIKGEPRFVELYIVGHNINGFDEIVLAAQVINNRLDVPGPFKISRNFIPRAGKILFNDITFALPNPHYKKRTNFLLWEHGGCDDQDFKYQYLKVMVRDTFALTHTSLRKAAQAYALPVEKGCCPYKAVNQFYMLGSYRADANGFPLEEYWKDKEEYLLNQELWKKKGEKNYNLIGETLNYCALDVLVTASLVEKLRSSYAQFVTDAVGLDAAHFNVFQRPTISSNSHAIFRQILYRAEKPQRTHLGPNILAPSHELYDYVRASIRGGRCYPTYIGVLKEPIYVYDICGMYASALTHPMPWGPPLNPYERALAVRQWQVALENYTCKIDYFDKNLCPGIFTIDADPPDENQLDVLPPFCSRKGGRLAWTNESLRGEVVTSVDLVTLHNRGWRLRLLSDERTTIFPTWKCLAREYVQLNIAAKERADRDKNQTLRSIAKLLSNALYGSFATKLDNKKIVFSDQMEESLMKEIAAGRLNIKSSSFIETDTLSTEVMPAFERVYSPNQLALVNSEAEESDEDQGPAPFYSPPPENCEHVTYTYKPITFMDAEEGDMCLHTLESSNPLINNDRYPSHVASFVLAWTRAFVSEWSEFLYEEDRGIPLKDRPLKSVYGDTDSLFVTEKGRRLMESQGKKRIKKYGGKLVFDPSCPELTWSVECETVCSYCGADAYSPESVFLAPKLYALKCLQCPHCGSTSKGKIRAKGHATEALSYDLMLKCYLAEAQGEDTRFSTSRLSLKRTLASAQPGAHPFTVTETTLTRTLRPWKDKTLVHLDAHRLVPYSNSQPNPRNEEVCWIEMA.

Residues 773–792 form a disordered region; that stretch reads NSEAEESDEDQGPAPFYSPP.

The protein belongs to the DNA polymerase type-B family. In terms of assembly, heterodimer with the terminal protein; this heterodimer binds to bp 9 to 18 of the genome. Forms a complex with viral pTP, DBP and hosts NFIA and POU2F1/OCT1 for initiation of replication.

It localises to the host nucleus. The catalysed reaction is DNA(n) + a 2'-deoxyribonucleoside 5'-triphosphate = DNA(n+1) + diphosphate. Its function is as follows. Eukaryotic-type DNA polymerase involved in viral genomic replication. DNA synthesis is protein primed, and acts in a strand displacement replication. Assembles in complex with viral pTP, DBP, host NFIA and host POU2F1/OCT1 on viral origin of replication. The polymerase covalently transfers dCMP onto pTP, thereby initiating complementary strand synthesis. The polypeptide is DNA polymerase (Human adenovirus A serotype 12 (HAdV-12)).